The chain runs to 110 residues: Ig kappa chain V region 2717 (110 aa).

The tract at residues 1-23 (VEVLTQTPSPVSAAVGGTVTISC) is framework-1. Residues 24-36 (QSTKSIYBBBYLA) are complementarity-determining-1. The tract at residues 37 to 51 (WYQZKPGQPPKALIY) is framework-2. The complementarity-determining-2 stretch occupies residues 52–58 (TASSLAS). A framework-3 region spans residues 59–90 (GVPSRFTGSGSGTZFTLTLSDVZCDDAATYYC). The interval 91–99 (GGADYTGYS) is complementarity-determining-3. The interval 100–109 (FGGGTEVVVK) is framework-4.

This Oryctolagus cuniculus (Rabbit) protein is Ig kappa chain V region 2717.